A 300-amino-acid polypeptide reads, in one-letter code: Junctional adhesion molecule A (300 aa).

An N-terminal signal peptide occupies residues 1–26 (MGTEGKAGSKLLFLFTSMILGSLVQG). The Extracellular segment spans residues 27–238 (KGSVYSPQTA…MEAVELNVGG (212 aa)). Ig-like V-type domains are found at residues 28–122 (GSVY…GEVS) and 134–228 (PTVS…EAVR). 2 disulfide bridges follow: Cys-49/Cys-108 and Cys-152/Cys-212. N-linked (GlcNAc...) asparagine glycosylation is present at Asn-185. Residues 239–259 (IVAAVLVTLILLGLLIFGIWF) form a helical membrane-spanning segment. The Cytoplasmic portion of the chain corresponds to 260–300 (AYSRGYFERTKKGTAPGKKVIYSQPSARSEGEFKQTSSFLV). Ser-282, Ser-285, and Ser-288 each carry phosphoserine.

The protein belongs to the immunoglobulin superfamily. Interacts with the ninth PDZ domain of MPDZ. Interacts with the first PDZ domain of PARD3. The association between PARD3 and PARD6B probably disrupts this interaction. Interacts with ITGAL (via I-domain). Interacts with CD151. N-glycosylated.

Its subcellular location is the cell junction. The protein resides in the tight junction. The protein localises to the cell membrane. Its function is as follows. Seems to play a role in epithelial tight junction formation. Appears early in primordial forms of cell junctions and recruits PARD3. The association of the PARD6-PARD3 complex may prevent the interaction of PARD3 with JAM1, thereby preventing tight junction assembly. Plays a role in regulating monocyte transmigration involved in integrity of epithelial barrier. Ligand for integrin alpha-L/beta-2 involved in memory T-cell and neutrophil transmigration. This Rattus norvegicus (Rat) protein is Junctional adhesion molecule A (F11r).